The chain runs to 241 residues: Glutamate/aspartate import ATP-binding protein GltL (241 aa).

Positions I2–L236 constitute an ABC transporter domain. G34 to S41 contributes to the ATP binding site.

This sequence belongs to the ABC transporter superfamily. In terms of assembly, the complex is composed of two ATP-binding proteins (GltL), two transmembrane proteins (GltJ and GltK) and a solute-binding protein (GltI).

The protein resides in the cell inner membrane. The catalysed reaction is a polar amino acid(out) + ATP + H2O = a polar amino acid(in) + ADP + phosphate + H(+). It catalyses the reaction L-glutamate(out) + ATP + H2O = L-glutamate(in) + ADP + phosphate + H(+). The enzyme catalyses L-aspartate(out) + ATP + H2O = L-aspartate(in) + ADP + phosphate + H(+). Part of the ABC transporter complex GltIJKL involved in glutamate and aspartate uptake. Probably responsible for energy coupling to the transport system. The polypeptide is Glutamate/aspartate import ATP-binding protein GltL (gltL) (Escherichia coli O157:H7).